A 416-amino-acid chain; its full sequence is POC1 centriolar protein homolog A (416 aa).

7 WD repeats span residues 16–55, 58–97, 100–139, 142–181, 184–223, 226–265, and 268–307; these read GHRD…RAYR, GHKD…ESVL, AHTG…IICT, EHNN…LIHT, EPGG…LLQH, VHSA…LLYT, and GHQG…VDYS. A disordered region spans residues 311–340; the sequence is QQKRDHRTPSAQASGAAGDPESRSGQKTEV. A coiled-coil region spans residues 380 to 412; the sequence is QLDVLTQTVAILEQRLTLTEDKLKECLEQQHQA.

The protein belongs to the WD repeat POC1 family.

Functionally, may play an important role in centriole assembly and/or stability and ciliogenesis. This is POC1 centriolar protein homolog A from Danio rerio (Zebrafish).